A 266-amino-acid chain; its full sequence is Killer cell lectin-like receptor 3 (266 aa).

The Cytoplasmic portion of the chain corresponds to 1 to 48; that stretch reads MSEPEVTYSTVRLHKSSGLQKLVRHEETQGPREVGNRKCSAPWQLIVK. A helical; Signal-anchor for type II membrane protein membrane pass occupies residues 49–69; that stretch reads ALGILCFLLLVTVAVLAVKIF. Topologically, residues 70-266 are extracellular; it reads QYNQHKQEIN…CGKKLDKFPD (197 aa). Residues Asn-79, Asn-87, Asn-104, and Asn-113 are each glycosylated (N-linked (GlcNAc...) asparagine). The interval 147–151 is involved in dimerization; it reads WFCYS. Cysteines 149 and 154 form a disulfide. A C-type lectin domain is found at 150-258; it reads YSTKCYYFIM…CNIPYYCICG (109 aa). N-linked (GlcNAc...) asparagine glycosylation is present at Asn-160. Implicated in MHC class I binding stretches follow at residues 160–162, 195–196, 207–208, 224–233, and 240–245; these read NKT, IP, KK, MKIRKMNFKS, and SKARIE. 3 disulfide bridges follow: Cys-167-Cys-255, Cys-171-Cys-257, and Cys-236-Cys-249.

Homodimer; disulfide-linked.

It localises to the membrane. Its function is as follows. Receptor on natural killer (NK) cells for class I MHC. This Mus musculus (Mouse) protein is Killer cell lectin-like receptor 3 (Klra3).